The primary structure comprises 273 residues: Large ribosomal subunit protein uL2 (273 aa).

The interval Val223 to Gly273 is disordered. A compositionally biased stretch (basic and acidic residues) spans Lys262 to Gly273.

The protein belongs to the universal ribosomal protein uL2 family. In terms of assembly, part of the 50S ribosomal subunit. Forms a bridge to the 30S subunit in the 70S ribosome.

Functionally, one of the primary rRNA binding proteins. Required for association of the 30S and 50S subunits to form the 70S ribosome, for tRNA binding and peptide bond formation. It has been suggested to have peptidyltransferase activity; this is somewhat controversial. Makes several contacts with the 16S rRNA in the 70S ribosome. The sequence is that of Large ribosomal subunit protein uL2 from Syntrophus aciditrophicus (strain SB).